The sequence spans 379 residues: Anhydro-N-acetylmuramic acid kinase (379 aa).

An ATP-binding site is contributed by Gly-9–Asp-16.

The protein belongs to the anhydro-N-acetylmuramic acid kinase family.

The enzyme catalyses 1,6-anhydro-N-acetyl-beta-muramate + ATP + H2O = N-acetyl-D-muramate 6-phosphate + ADP + H(+). It functions in the pathway amino-sugar metabolism; 1,6-anhydro-N-acetylmuramate degradation. The protein operates within cell wall biogenesis; peptidoglycan recycling. In terms of biological role, catalyzes the specific phosphorylation of 1,6-anhydro-N-acetylmuramic acid (anhMurNAc) with the simultaneous cleavage of the 1,6-anhydro ring, generating MurNAc-6-P. Is required for the utilization of anhMurNAc either imported from the medium or derived from its own cell wall murein, and thus plays a role in cell wall recycling. The sequence is that of Anhydro-N-acetylmuramic acid kinase from Prochlorococcus marinus (strain MIT 9303).